Here is a 184-residue protein sequence, read N- to C-terminus: MAAVTKKIKRDPAKNPMRDLHIRKLCLNICVGESGDRLTRAAKVLEQLTGQQPVFSKARYTVRSFGIRRNEKIAVHCTVRGAKAEEILERGLKVREYELRRENFSSTGNFGFGIQEHIDLGIKYDPSIGIYGLDFYVVLGRPGYNVNHRKRKSGTVGFQHRLTKEDAMKWFQQKYDGIILNTKK.

The protein belongs to the universal ribosomal protein uL5 family. As to quaternary structure, component of the large ribosomal subunit. Interacts with Fmr1 to form the RNA-induced silencing complex (RISC), a ribonucleoprotein (RNP) complex involved in translation regulation, other components of the complex are RpL5, Rm62, AGO2 and Dcr-1.

Its subcellular location is the nucleus. It is found in the cytoplasm. Functionally, component of the ribosome, a large ribonucleoprotein complex responsible for the synthesis of proteins in the cell. The small ribosomal subunit (SSU) binds messenger RNAs (mRNAs) and translates the encoded message by selecting cognate aminoacyl-transfer RNA (tRNA) molecules. The large subunit (LSU) contains the ribosomal catalytic site termed the peptidyl transferase center (PTC), which catalyzes the formation of peptide bonds, thereby polymerizing the amino acids delivered by tRNAs into a polypeptide chain. The nascent polypeptides leave the ribosome through a tunnel in the LSU and interact with protein factors that function in enzymatic processing, targeting, and the membrane insertion of nascent chains at the exit of the ribosomal tunnel. The sequence is that of Large ribosomal subunit protein uL5 (RpL11) from Drosophila melanogaster (Fruit fly).